The chain runs to 178 residues: uncharacterized protein (178 aa).

4 helical membrane passes run Ala-29 to Phe-49, Val-76 to Leu-96, Pro-105 to Phe-125, and Ile-139 to Phe-159.

It is found in the cell membrane. This is an uncharacterized protein from Bacillus subtilis (strain 168).